Consider the following 466-residue polypeptide: MFNIDEVYTISSFLSVCNKTIENNIPTCWLQGEISNLTRPASGHWYFSLKDNTVQVRCALFRFNQRYIKFSPKNGIEVLVRVVPTLYEARGNFQLVIQQIEQIGIGNLNLAFKQLKKDLDNEGLFDNIHKKPLPNTINTIGVISSSTGAVIQDIIKVLNNRYPFVKILLFDSIVQGQDSIKKLTNALNIADQSGKCDVIIIARGGGSLEDLWAFNEEILARAIFNAKTPIISAIGHETDTTIADLVSDIRAPTPSFAAMLVTSNRLELLSNTNKLYTQLHQSYRQTLHYYQSRLNQLKLKISNPNKQIDYLNQKLDYLSINLTTRKESIFTLNNAKLNSLFTTLKQHSPIKTIKHAKSLNQMSLNQLKYQIKQIINTNNNMLYLATERLQKIIMALTNKHKARLSIQANSLHYLSPLNILARGFSITSDTKNQVLSSVTNIKINQTIITQLDNGALYSNIEKIEKN.

The protein belongs to the XseA family. Heterooligomer composed of large and small subunits.

The protein localises to the cytoplasm. The enzyme catalyses Exonucleolytic cleavage in either 5'- to 3'- or 3'- to 5'-direction to yield nucleoside 5'-phosphates.. Its function is as follows. Bidirectionally degrades single-stranded DNA into large acid-insoluble oligonucleotides, which are then degraded further into small acid-soluble oligonucleotides. This chain is Exodeoxyribonuclease 7 large subunit, found in Vesicomyosocius okutanii subsp. Calyptogena okutanii (strain HA).